The following is a 317-amino-acid chain: MYTKIIGTGSYLPEQVRTNADLEKMVDTSDEWIVTRTGIRERHIAAPNETVSTMGFEAATRAIEMAGIEKDQIGLIVVATTSATHAFPSAACQIQSMLDIKGCPAFDVAAACAGFTYALSVADQYVKSGAVKYALVVGSDVLARTCDPTDRGTIIIFGDGAGAAVLAASEEPGIISTHLHADGSYGELLTLPNADRVNPENSIHLTMAGNEVFKVAVTELAHIVDETLAANNLDRSQLDWLVPHQANLRIISATAKKLGMSMDNVVVTLDRHGNTSAASVPCALDEAVRDGRIKPGQLVLLEAFGGGFTWGSALVRF.

Residues cysteine 112 and histidine 244 contribute to the active site. Residues 245–249 are ACP-binding; it reads QANLR. Asparagine 274 is an active-site residue.

This sequence belongs to the thiolase-like superfamily. FabH family. As to quaternary structure, homodimer.

The protein resides in the cytoplasm. It carries out the reaction malonyl-[ACP] + acetyl-CoA + H(+) = 3-oxobutanoyl-[ACP] + CO2 + CoA. It functions in the pathway lipid metabolism; fatty acid biosynthesis. In terms of biological role, catalyzes the condensation reaction of fatty acid synthesis by the addition to an acyl acceptor of two carbons from malonyl-ACP. Catalyzes the first condensation reaction which initiates fatty acid synthesis and may therefore play a role in governing the total rate of fatty acid production. Possesses both acetoacetyl-ACP synthase and acetyl transacylase activities. Its substrate specificity determines the biosynthesis of branched-chain and/or straight-chain of fatty acids. This Shigella boydii serotype 4 (strain Sb227) protein is Beta-ketoacyl-[acyl-carrier-protein] synthase III.